Here is a 236-residue protein sequence, read N- to C-terminus: Phosphoribosylaminoimidazole-succinocarboxamide synthase (236 aa).

The protein belongs to the SAICAR synthetase family.

It carries out the reaction 5-amino-1-(5-phospho-D-ribosyl)imidazole-4-carboxylate + L-aspartate + ATP = (2S)-2-[5-amino-1-(5-phospho-beta-D-ribosyl)imidazole-4-carboxamido]succinate + ADP + phosphate + 2 H(+). Its pathway is purine metabolism; IMP biosynthesis via de novo pathway; 5-amino-1-(5-phospho-D-ribosyl)imidazole-4-carboxamide from 5-amino-1-(5-phospho-D-ribosyl)imidazole-4-carboxylate: step 1/2. The protein is Phosphoribosylaminoimidazole-succinocarboxamide synthase of Pseudomonas savastanoi pv. phaseolicola (strain 1448A / Race 6) (Pseudomonas syringae pv. phaseolicola (strain 1448A / Race 6)).